The chain runs to 205 residues: Ribonuclease HII (205 aa).

The region spanning 14-201 (EIVAGVDEAG…KGNINHSAIL (188 aa)) is the RNase H type-2 domain. Residues Asp-20, Glu-21, and Asp-111 each contribute to the a divalent metal cation site.

It belongs to the RNase HII family. The cofactor is Mn(2+). It depends on Mg(2+) as a cofactor.

The protein localises to the cytoplasm. The enzyme catalyses Endonucleolytic cleavage to 5'-phosphomonoester.. Functionally, endonuclease that specifically degrades the RNA of RNA-DNA hybrids. This Orientia tsutsugamushi (strain Boryong) (Rickettsia tsutsugamushi) protein is Ribonuclease HII.